The sequence spans 108 residues: MFYAIILFILAGLAEIGGGYLVWLWLREAKPFWYGIIGGLILVLYGVIPTLQKFPSFGRVYAAYGGVFVILAVLWGWGIDKKVPDNYDWIGAVICLVGVSVMLWAPRN.

Transmembrane regions (helical) follow at residues 5–25, 31–51, 60–80, and 86–106; these read IILF…VWLW, PFWY…IPTL, VYAA…WGID, and NYDW…LWAP.

Belongs to the UPF0060 family.

It is found in the cell membrane. This is UPF0060 membrane protein DSY4629 from Desulfitobacterium hafniense (strain Y51).